Reading from the N-terminus, the 289-residue chain is Heme oxygenase 1 (289 aa).

Topologically, residues 1 to 266 (MERPQLDSMS…SQISTSSSQT (266 aa)) are cytoplasmic. 4 residues coordinate heme b: Lys18, His25, Tyr134, and Arg183. The interval 225–261 (HKDQSPSQTEFLRQRPASLVQDTTSAETPRGKSQIST) is disordered. Residues Ser229 and Ser242 each carry the phosphoserine modification. Residues 244-261 (VQDTTSAETPRGKSQIST) are compositionally biased toward polar residues. The helical; Anchor for type IV membrane protein transmembrane segment at 267-289 (PLLRWVLTLSFLLATVAVGIYAM) threads the bilayer.

Belongs to the heme oxygenase family. Homodimer and higher order homooligomer. Oligomerization is crucial for its stability and function in the endoplasmic reticulum. Interacts with FLVCR2; this interaction is potentiated in the presence of heme. Post-translationally, a soluble form arises by proteolytic removal of the membrane anchor.

It is found in the endoplasmic reticulum membrane. The catalysed reaction is heme b + 3 reduced [NADPH--hemoprotein reductase] + 3 O2 = biliverdin IXalpha + CO + Fe(2+) + 3 oxidized [NADPH--hemoprotein reductase] + 3 H2O + H(+). With respect to regulation, inhibited by metalloporphyrins such as Sn- and Zn-protoporphyrins. Its function is as follows. Catalyzes the oxidative cleavage of heme at the alpha-methene bridge carbon, released as carbon monoxide (CO), to generate biliverdin IXalpha, while releasing the central heme iron chelate as ferrous iron. Affords protection against programmed cell death and this cytoprotective effect relies on its ability to catabolize free heme and prevent it from sensitizing cells to undergo apoptosis. In terms of biological role, catalyzes the oxidative cleavage of heme at the alpha-methene bridge carbon, released as carbon monoxide (CO), to generate biliverdin IXalpha, while releasing the central heme iron chelate as ferrous iron. This chain is Heme oxygenase 1 (Hmox1), found in Rattus norvegicus (Rat).